The chain runs to 149 residues: Arginine repressor (149 aa).

The protein belongs to the ArgR family.

It is found in the cytoplasm. It functions in the pathway amino-acid biosynthesis; L-arginine biosynthesis [regulation]. Regulates arginine biosynthesis genes. The protein is Arginine repressor of Exiguobacterium sibiricum (strain DSM 17290 / CCUG 55495 / CIP 109462 / JCM 13490 / 255-15).